Reading from the N-terminus, the 580-residue chain is tRNA-guanine(15) transglycosylase (580 aa).

Asp91 (nucleophile) is an active-site residue. Residues Asp126 and Ala192 each contribute to the substrate site. Residues Cys275, Cys277, and Cys280 each coordinate Zn(2+). The PUA domain occupies 504–579 (RMRVVVDEDA…LAVKVRRGVE (76 aa)).

Belongs to the archaeosine tRNA-ribosyltransferase family. Requires Zn(2+) as cofactor.

It carries out the reaction guanosine(15) in tRNA + 7-cyano-7-deazaguanine = 7-cyano-7-carbaguanosine(15) in tRNA + guanine. It functions in the pathway tRNA modification; archaeosine-tRNA biosynthesis. Functionally, exchanges the guanine residue with 7-cyano-7-deazaguanine (preQ0) at position 15 in the dihydrouridine loop (D-loop) of archaeal tRNAs. In Thermococcus kodakarensis (strain ATCC BAA-918 / JCM 12380 / KOD1) (Pyrococcus kodakaraensis (strain KOD1)), this protein is tRNA-guanine(15) transglycosylase.